A 240-amino-acid polypeptide reads, in one-letter code: UPF0309 protein in nagA 3'region (240 aa).

The SIS domain maps to 31–206 (IVKRLVQGGI…CAQIIEILHE (176 aa)).

This sequence belongs to the UPF0309 family.

This is UPF0309 protein in nagA 3'region from Lysinibacillus sphaericus (Bacillus sphaericus).